The chain runs to 54 residues: ATP synthase protein 8 (54 aa).

Residues 8–28 (WWLLNFFLGWTSLLVIFIILL) form a helical membrane-spanning segment.

It belongs to the ATPase protein 8 family. F-type ATPases have 2 components, CF(1) - the catalytic core - and CF(0) - the membrane proton channel.

It is found in the mitochondrion membrane. In terms of biological role, mitochondrial membrane ATP synthase (F(1)F(0) ATP synthase or Complex V) produces ATP from ADP in the presence of a proton gradient across the membrane which is generated by electron transport complexes of the respiratory chain. F-type ATPases consist of two structural domains, F(1) - containing the extramembraneous catalytic core and F(0) - containing the membrane proton channel, linked together by a central stalk and a peripheral stalk. During catalysis, ATP synthesis in the catalytic domain of F(1) is coupled via a rotary mechanism of the central stalk subunits to proton translocation. Part of the complex F(0) domain. Minor subunit located with subunit a in the membrane. This is ATP synthase protein 8 (MT-ATP8) from Patiria pectinifera (Starfish).